Reading from the N-terminus, the 423-residue chain is uncharacterized protein (423 aa).

3 residues coordinate substrate: Ser51, Asp138, and Asn150. ATP contacts are provided by residues 170-171 (TD) and 214-220 (TGGMRTK). A PUA domain is found at 315 to 406 (KGAIIIDENS…EKIHDVLGYS (92 aa)).

It belongs to the glutamate 5-kinase family.

It is found in the cytoplasm. This is an uncharacterized protein from Saccharomyces cerevisiae (strain ATCC 204508 / S288c) (Baker's yeast).